The following is a 411-amino-acid chain: Translation initiation factor 2 subunit gamma (411 aa).

Residues 9-203 (QAEVNIGMVG…AIEDFIPTPK (195 aa)) form the tr-type G domain. Residues 18 to 25 (GHVDHGKT) form a G1 region. The Mg(2+) site is built by Asp-21, Thr-25, Gly-46, and Thr-48. A GTP-binding site is contributed by 21–26 (DHGKTT). The tract at residues 46-50 (GITIK) is G2. 4 residues coordinate Zn(2+): Cys-61, Cys-64, Cys-73, and Cys-76. The segment at 90–93 (DAPG) is G3. Residues 146 to 149 (NKIE) and 181 to 183 (SAL) contribute to the GTP site. The interval 146–149 (NKIE) is G4. Residues 181 to 183 (SAL) are G5.

It belongs to the TRAFAC class translation factor GTPase superfamily. Classic translation factor GTPase family. EIF2G subfamily. Heterotrimer composed of an alpha, a beta and a gamma chain. The cofactor is Mg(2+).

It carries out the reaction GTP + H2O = GDP + phosphate + H(+). Functionally, eIF-2 functions in the early steps of protein synthesis by forming a ternary complex with GTP and initiator tRNA. This chain is Translation initiation factor 2 subunit gamma, found in Pyrococcus abyssi (strain GE5 / Orsay).